A 57-amino-acid polypeptide reads, in one-letter code: Somatostatin-2 (57 aa).

Residues 1 to 26 (GRSHMVLNSALEGARGGPGGEEIPER) are disordered.

It belongs to the somatostatin family.

It is found in the secreted. Its function is as follows. Somatostatin inhibits the release of somatotropin. This is Somatostatin-2 (sst2) from Piaractus mesopotamicus (Small-scaled pacu).